Reading from the N-terminus, the 239-residue chain is Glucosamine-6-phosphate deaminase (239 aa).

Asp-62 acts as the Proton acceptor; for enolization step in catalysis. Residue Asn-128 is the For ring-opening step of the active site. Residue His-130 is the Proton acceptor; for ring-opening step of the active site. The active-site For ring-opening step is the Glu-135.

This sequence belongs to the glucosamine/galactosamine-6-phosphate isomerase family. NagB subfamily.

It carries out the reaction alpha-D-glucosamine 6-phosphate + H2O = beta-D-fructose 6-phosphate + NH4(+). Its pathway is amino-sugar metabolism; N-acetylneuraminate degradation; D-fructose 6-phosphate from N-acetylneuraminate: step 5/5. In terms of biological role, catalyzes the reversible isomerization-deamination of glucosamine 6-phosphate (GlcN6P) to form fructose 6-phosphate (Fru6P) and ammonium ion. This Lactobacillus acidophilus (strain ATCC 700396 / NCK56 / N2 / NCFM) protein is Glucosamine-6-phosphate deaminase.